We begin with the raw amino-acid sequence, 382 residues long: Dual-specificity RNA methyltransferase RlmN (382 aa).

Glutamate 95 acts as the Proton acceptor in catalysis. The 247-residue stretch at 101–347 folds into the Radical SAM core domain; the sequence is EDDRGTLCIS…TTVRKTRGDD (247 aa). An intrachain disulfide couples cysteine 108 to cysteine 352. [4Fe-4S] cluster is bound by residues cysteine 115, cysteine 119, and cysteine 122. S-adenosyl-L-methionine contacts are provided by residues 178–179, serine 210, 232–234, and asparagine 309; these read GE and SLH. Cysteine 352 (S-methylcysteine intermediate) is an active-site residue.

It belongs to the radical SAM superfamily. RlmN family. The cofactor is [4Fe-4S] cluster.

It localises to the cytoplasm. The catalysed reaction is adenosine(2503) in 23S rRNA + 2 reduced [2Fe-2S]-[ferredoxin] + 2 S-adenosyl-L-methionine = 2-methyladenosine(2503) in 23S rRNA + 5'-deoxyadenosine + L-methionine + 2 oxidized [2Fe-2S]-[ferredoxin] + S-adenosyl-L-homocysteine. It catalyses the reaction adenosine(37) in tRNA + 2 reduced [2Fe-2S]-[ferredoxin] + 2 S-adenosyl-L-methionine = 2-methyladenosine(37) in tRNA + 5'-deoxyadenosine + L-methionine + 2 oxidized [2Fe-2S]-[ferredoxin] + S-adenosyl-L-homocysteine. Its function is as follows. Specifically methylates position 2 of adenine 2503 in 23S rRNA and position 2 of adenine 37 in tRNAs. m2A2503 modification seems to play a crucial role in the proofreading step occurring at the peptidyl transferase center and thus would serve to optimize ribosomal fidelity. The polypeptide is Dual-specificity RNA methyltransferase RlmN (Bordetella avium (strain 197N)).